The sequence spans 224 residues: Metalloproteinase inhibitor 4 (224 aa).

An N-terminal signal peptide occupies residues 1-29; sequence MPQSPRPVPSWALLLRLLALLRPPGLGEA. Cys30 contributes to the Zn(2+) binding site. Involved in metalloproteinase-binding stretches follow at residues 30–33 and 99–100; these read CSCA and SS. 6 disulfides stabilise this stretch: Cys30-Cys102, Cys32-Cys131, Cys42-Cys156, Cys158-Cys205, Cys163-Cys168, and Cys176-Cys197. The NTR domain maps to 30 to 156; it reads CSCAPAHPQQ…SLNHHYHLNC (127 aa).

The protein belongs to the protease inhibitor I35 (TIMP) family.

Its subcellular location is the secreted. Complexes with metalloproteinases (such as collagenases) and irreversibly inactivates them by binding to their catalytic zinc cofactor. This is Metalloproteinase inhibitor 4 (TIMP4) from Bos taurus (Bovine).